A 408-amino-acid polypeptide reads, in one-letter code: Argininosuccinate synthase (408 aa).

Residues 10–18 (AYSGGLDTS) and alanine 37 contribute to the ATP site. L-citrulline is bound by residues tyrosine 90 and serine 95. ATP is bound at residue glycine 120. The L-aspartate site is built by threonine 122, asparagine 126, and aspartate 127. L-citrulline is bound at residue asparagine 126. The L-citrulline site is built by arginine 130, serine 182, serine 191, glutamate 267, and tyrosine 279.

Belongs to the argininosuccinate synthase family. Type 1 subfamily. As to quaternary structure, homotetramer.

The protein localises to the cytoplasm. The enzyme catalyses L-citrulline + L-aspartate + ATP = 2-(N(omega)-L-arginino)succinate + AMP + diphosphate + H(+). Its pathway is amino-acid biosynthesis; L-arginine biosynthesis; L-arginine from L-ornithine and carbamoyl phosphate: step 2/3. This is Argininosuccinate synthase from Paraburkholderia xenovorans (strain LB400).